We begin with the raw amino-acid sequence, 700 residues long: Elongation factor G 1 (700 aa).

The tr-type G domain maps to Glu8–Ile290. GTP-binding positions include Ala17–Thr24, Asp88–His92, and Asn142–Asp145.

It belongs to the TRAFAC class translation factor GTPase superfamily. Classic translation factor GTPase family. EF-G/EF-2 subfamily.

It is found in the cytoplasm. Catalyzes the GTP-dependent ribosomal translocation step during translation elongation. During this step, the ribosome changes from the pre-translocational (PRE) to the post-translocational (POST) state as the newly formed A-site-bound peptidyl-tRNA and P-site-bound deacylated tRNA move to the P and E sites, respectively. Catalyzes the coordinated movement of the two tRNA molecules, the mRNA and conformational changes in the ribosome. The chain is Elongation factor G 1 from Bordetella avium (strain 197N).